Here is a 407-residue protein sequence, read N- to C-terminus: Aspartokinase (407 aa).

Residue 7–10 (KFGG) participates in ATP binding. A substrate-binding site is contributed by 25-30 (RVIEEV). Position 41 (serine 41) interacts with ATP. Residues 47–49 (TDE), glutamate 74, 125–126 (LD), 150–153 (RGGS), and serine 153 contribute to the substrate site. ATP contacts are provided by residues 173–174 (TD) and 179–184 (FTTDPR). ACT domains follow at residues 264-338 (VTVV…LAKV) and 340-407 (IVGS…AVRS). Residues 289–291 (NVD), glutamine 295, 351–352 (VA), 365–366 (EI), and 372–373 (SE) each bind substrate.

It belongs to the aspartokinase family. Tetramer consisting of 2 isoforms Alpha (catalytic and regulation) and of a homodimer of 2 isoforms Beta (regulation).

It carries out the reaction L-aspartate + ATP = 4-phospho-L-aspartate + ADP. It functions in the pathway amino-acid biosynthesis; L-lysine biosynthesis via DAP pathway; (S)-tetrahydrodipicolinate from L-aspartate: step 1/4. The protein operates within amino-acid biosynthesis; L-methionine biosynthesis via de novo pathway; L-homoserine from L-aspartate: step 1/3. It participates in amino-acid biosynthesis; L-threonine biosynthesis; L-threonine from L-aspartate: step 1/5. With respect to regulation, lysine-sensitive. Catalyzes the phosphorylation of the beta-carboxyl group of aspartic acid with ATP to yield 4-phospho-L-aspartate, which is involved in the branched biosynthetic pathway leading to the biosynthesis of amino acids threonine, isoleucine and methionine. This Geobacillus stearothermophilus (Bacillus stearothermophilus) protein is Aspartokinase (lysC).